We begin with the raw amino-acid sequence, 830 residues long: V-type proton ATPase 116 kDa subunit a 3 (830 aa).

Topologically, residues 1-385 (MGSMFRSEEV…DAYGVGRYQE (385 aa)) are cytoplasmic. The disordered stretch occupies residues 139–158 (QLAAAHTDGASERTPLLQAP). Residues 386-404 (VNPAPYTIITFPFLFAVMF) traverse the membrane as a helical segment. The Vacuolar segment spans residues 405 to 406 (GD). The helical transmembrane segment at 407–423 (VGHGLLMFLFALAMVLA) threads the bilayer. Residues 424–438 (ENRPAVKAAQNEIWQ) lie on the Cytoplasmic side of the membrane. A helical membrane pass occupies residues 439–468 (TFFRGRYLLLLMGLFSIYTGFIYNECFSRA). Residues 469-532 (TSIFPSGWSV…AANHLSFLNS (64 aa)) lie on the Vacuolar side of the membrane. Residues 533–552 (FKMKMSVILGVVHMAFGVVL) traverse the membrane as a helical segment. The Cytoplasmic portion of the chain corresponds to 553–570 (GVFNHVHFGQRHRLLLET). The helical transmembrane segment at 571–591 (LPELTFLLGLFGYLVFLVIYK) threads the bilayer. The Vacuolar segment spans residues 592–635 (WLCVWAARAASAPSILIHFINMFLFSHSPSNRLLYPRQEVVQAT). The chain crosses the membrane as a helical span at residues 636-655 (LVVLALAMVPILLLGTPLHL). The Cytoplasmic portion of the chain corresponds to 656–720 (LHRHRRRLRR…EVLMHQAIHT (65 aa)). A disordered region spans residues 681–701 (LPDASVNGWSSDEEKAGGLDD). A helical membrane pass occupies residues 721 to 745 (IEFCLGCVSNTASYLRLWALSLAHA). Residues 746–766 (QLSEVLWAMVMRIGLGLGREV) lie on the Vacuolar side of the membrane. Residues 767 to 807 (GVAAVVLVPIFAAFAVMTVAILLVMEGLSAFLHALRLHWVE) traverse the membrane as a helical segment. At 808-830 (FQNKFYSGTGYKLSPFTFAATDD) the chain is on the cytoplasmic side.

Belongs to the V-ATPase 116 kDa subunit family. In terms of assembly, V-ATPase is a heteromultimeric enzyme made up of two complexes: the ATP-hydrolytic V1 complex and the proton translocation V0 complex. The V1 complex consists of three catalytic AB heterodimers that form a heterohexamer, three peripheral stalks each consisting of EG heterodimers, one central rotor including subunits D and F, and the regulatory subunits C and H. The proton translocation complex V0 consists of the proton transport subunit a, a ring of proteolipid subunits c9c'', rotary subunit d, subunits e and f, and the accessory subunits ATP6AP1/Ac45 and ATP6AP2/PRR. As to expression, isoform long is highly expressed in osteoclastomas. Isoform short is highly expressed in thymus.

It localises to the membrane. In terms of biological role, subunit of the V0 complex of vacuolar(H+)-ATPase (V-ATPase), a multisubunit enzyme composed of a peripheral complex (V1) that hydrolyzes ATP and a membrane integral complex (V0) that translocates protons. V-ATPase is responsible for acidifying and maintaining the pH of intracellular compartments and in some cell types, is targeted to the plasma membrane, where it is responsible for acidifying the extracellular environment. Seems to be directly involved in T-cell activation. The sequence is that of V-type proton ATPase 116 kDa subunit a 3 (TCIRG1) from Homo sapiens (Human).